The following is a 431-amino-acid chain: Bifunctional protein GlmU (431 aa).

Residues 1–223 (MNLSIVILAA…EENFKGVNSK (223 aa)) are pyrophosphorylase. Residues 8–11 (LAAG), Lys22, Gln74, and 81–82 (GT) each bind UDP-N-acetyl-alpha-D-glucosamine. Asp102 is a Mg(2+) binding site. Residues Gly135, Glu149, Asn164, and Asn221 each contribute to the UDP-N-acetyl-alpha-D-glucosamine site. Residue Asn221 participates in Mg(2+) binding. The tract at residues 224 to 244 (ADLAEAEAIMTGRIRRRWMRE) is linker. The N-acetyltransferase stretch occupies residues 245–431 (GVRMRLPETI…FFARYFSSSK (187 aa)). Arg308 and Lys325 together coordinate UDP-N-acetyl-alpha-D-glucosamine. Catalysis depends on His336, which acts as the Proton acceptor. Residues Tyr339 and Asn350 each contribute to the UDP-N-acetyl-alpha-D-glucosamine site. Residues Ala353, 359–360 (NY), Ser378, Ala396, and Arg413 contribute to the acetyl-CoA site.

It in the N-terminal section; belongs to the N-acetylglucosamine-1-phosphate uridyltransferase family. The protein in the C-terminal section; belongs to the transferase hexapeptide repeat family. In terms of assembly, homotrimer. It depends on Mg(2+) as a cofactor.

Its subcellular location is the cytoplasm. It catalyses the reaction alpha-D-glucosamine 1-phosphate + acetyl-CoA = N-acetyl-alpha-D-glucosamine 1-phosphate + CoA + H(+). It carries out the reaction N-acetyl-alpha-D-glucosamine 1-phosphate + UTP + H(+) = UDP-N-acetyl-alpha-D-glucosamine + diphosphate. It participates in nucleotide-sugar biosynthesis; UDP-N-acetyl-alpha-D-glucosamine biosynthesis; N-acetyl-alpha-D-glucosamine 1-phosphate from alpha-D-glucosamine 6-phosphate (route II): step 2/2. Its pathway is nucleotide-sugar biosynthesis; UDP-N-acetyl-alpha-D-glucosamine biosynthesis; UDP-N-acetyl-alpha-D-glucosamine from N-acetyl-alpha-D-glucosamine 1-phosphate: step 1/1. It functions in the pathway bacterial outer membrane biogenesis; LPS lipid A biosynthesis. Its function is as follows. Catalyzes the last two sequential reactions in the de novo biosynthetic pathway for UDP-N-acetylglucosamine (UDP-GlcNAc). The C-terminal domain catalyzes the transfer of acetyl group from acetyl coenzyme A to glucosamine-1-phosphate (GlcN-1-P) to produce N-acetylglucosamine-1-phosphate (GlcNAc-1-P), which is converted into UDP-GlcNAc by the transfer of uridine 5-monophosphate (from uridine 5-triphosphate), a reaction catalyzed by the N-terminal domain. The sequence is that of Bifunctional protein GlmU from Wolinella succinogenes (strain ATCC 29543 / DSM 1740 / CCUG 13145 / JCM 31913 / LMG 7466 / NCTC 11488 / FDC 602W) (Vibrio succinogenes).